Reading from the N-terminus, the 293-residue chain is Pyridoxal 5'-phosphate synthase subunit PdxS (293 aa).

D-ribose 5-phosphate is bound at residue Asp23. Lys80 (schiff-base intermediate with D-ribose 5-phosphate) is an active-site residue. D-ribose 5-phosphate is bound at residue Gly152. Residue Arg164 coordinates D-glyceraldehyde 3-phosphate. Residues Gly213 and 234 to 235 each bind D-ribose 5-phosphate; that span reads GS.

This sequence belongs to the PdxS/SNZ family. In the presence of PdxT, forms a dodecamer of heterodimers.

The enzyme catalyses aldehydo-D-ribose 5-phosphate + D-glyceraldehyde 3-phosphate + L-glutamine = pyridoxal 5'-phosphate + L-glutamate + phosphate + 3 H2O + H(+). The protein operates within cofactor biosynthesis; pyridoxal 5'-phosphate biosynthesis. Functionally, catalyzes the formation of pyridoxal 5'-phosphate from ribose 5-phosphate (RBP), glyceraldehyde 3-phosphate (G3P) and ammonia. The ammonia is provided by the PdxT subunit. Can also use ribulose 5-phosphate and dihydroxyacetone phosphate as substrates, resulting from enzyme-catalyzed isomerization of RBP and G3P, respectively. The chain is Pyridoxal 5'-phosphate synthase subunit PdxS from Thermus thermophilus (strain ATCC 27634 / DSM 579 / HB8).